Reading from the N-terminus, the 597-residue chain is Miltiradiene synthase KSL2, chloroplastic (597 aa).

The N-terminal 51 residues, 1–51 (MSLAFNLRAIPFSGHTIQSRRGLFPVHESPMITTKPFVAVKCSLTTSTDLM), are a transit peptide targeting the chloroplast. 4 residues coordinate Mg(2+): Asp-329, Asp-333, Asn-473, and Glu-481. The short motif at 329–333 (DDFFD) is the DDXXD motif element.

Belongs to the terpene synthase family. The cofactor is Mg(2+).

The protein localises to the plastid. Its subcellular location is the chloroplast. The catalysed reaction is (+)-copalyl diphosphate = miltiradiene + diphosphate. The protein operates within secondary metabolite biosynthesis; terpenoid biosynthesis. Involved in the biosynthesis of ent-kaurene diterpenoids natural products such as oridonin, miltiradiene, eriocalyxin B and nezukol, known to exhibit antitumor, anti-inflammatory and antibacterial activities. Catalyzes the conversion of (+)-copalyl diphosphate ((+)-CPP) to miltiradiene. This Isodon japonicus (Scutellaria japonica) protein is Miltiradiene synthase KSL2, chloroplastic.